We begin with the raw amino-acid sequence, 78 residues long: UPF0248 protein Msed_0897 (78 aa).

It belongs to the UPF0248 family.

This chain is UPF0248 protein Msed_0897, found in Metallosphaera sedula (strain ATCC 51363 / DSM 5348 / JCM 9185 / NBRC 15509 / TH2).